The chain runs to 172 residues: Adenine phosphoribosyltransferase (172 aa).

The protein belongs to the purine/pyrimidine phosphoribosyltransferase family. In terms of assembly, homodimer.

The protein resides in the cytoplasm. It carries out the reaction AMP + diphosphate = 5-phospho-alpha-D-ribose 1-diphosphate + adenine. The protein operates within purine metabolism; AMP biosynthesis via salvage pathway; AMP from adenine: step 1/1. Functionally, catalyzes a salvage reaction resulting in the formation of AMP, that is energically less costly than de novo synthesis. The sequence is that of Adenine phosphoribosyltransferase from Staphylococcus aureus (strain bovine RF122 / ET3-1).